A 574-amino-acid polypeptide reads, in one-letter code: Cell division cycle 7-related protein kinase (574 aa).

Serine 27 is subject to Phosphoserine. Residues 58-574 enclose the Protein kinase domain; that stretch reads FKIEDKIGEG…LHPFFKDMSL (517 aa). ATP is bound by residues 64 to 72 and lysine 90; that span reads IGEGTFSSV. Residue aspartate 177 is the Proton acceptor of the active site. Lysine 268 participates in a covalent cross-link: Glycyl lysine isopeptide (Lys-Gly) (interchain with G-Cter in SUMO2). Threonine 503 bears the Phosphothreonine mark.

It belongs to the protein kinase superfamily. Ser/Thr protein kinase family. CDC7 subfamily. As to quaternary structure, forms a complex with either DBF4/DBF4A or DBF4B, leading to the activation of the kinase activity. Interacts with CLASPIN (via the acidic patch); the interaction is required for phosphorylation of MCM proteins and CLASPIN. Mg(2+) is required as a cofactor.

Its subcellular location is the nucleus. The enzyme catalyses L-seryl-[protein] + ATP = O-phospho-L-seryl-[protein] + ADP + H(+). It catalyses the reaction L-threonyl-[protein] + ATP = O-phospho-L-threonyl-[protein] + ADP + H(+). Its function is as follows. Kinase involved in initiation of DNA replication. Phosphorylates critical substrates that regulate the G1/S phase transition and initiation of DNA replication, such as MCM proteins and CLASPIN. The polypeptide is Cell division cycle 7-related protein kinase (Homo sapiens (Human)).